Here is a 95-residue protein sequence, read N- to C-terminus: Large ribosomal subunit protein uL23c (95 aa).

It belongs to the universal ribosomal protein uL23 family. In terms of assembly, part of the 50S ribosomal subunit.

It localises to the plastid. The protein localises to the chloroplast. In terms of biological role, binds to 23S rRNA. This chain is Large ribosomal subunit protein uL23c (rpl23), found in Chlamydomonas reinhardtii (Chlamydomonas smithii).